We begin with the raw amino-acid sequence, 418 residues long: Voltage-gated ClC-type chloride channel ClcB (418 aa).

10 helical membrane passes run 5 to 25 (LLIATVVGILAAFAVAGFRHA), 54 to 74 (LLTPALGGLAAGLLLMGWQKF), 146 to 166 (LWIACGAAAGMAAAYRAPLAG), 168 to 188 (LFIAEVLFGTMMLASLGPVII), 222 to 242 (ALIISTGVLAGLCGPLLLTLM), 258 to 278 (WQLALGGLIVGLLSLFTPAVW), 291 to 311 (APPLLMIIAGIFLCKLCAVLA), 316 to 336 (GAPGGVFTPTLFIGLAIGMLY), 352 to 372 (LLLGLTGMATLLAATTHAPIM), and 380 to 400 (MTGEYQLLPGLLIACVIASVI).

This sequence belongs to the chloride channel (TC 2.A.49) family. ClcB subfamily.

It is found in the cell inner membrane. Functionally, probably acts as an electrical shunt for an outwardly-directed proton pump that is linked to amino acid decarboxylation, as part of the extreme acid resistance (XAR) response. The polypeptide is Voltage-gated ClC-type chloride channel ClcB (Escherichia coli (strain ATCC 8739 / DSM 1576 / NBRC 3972 / NCIMB 8545 / WDCM 00012 / Crooks)).